The chain runs to 2640 residues: Collagen alpha-5(VI) chain (2640 aa).

The first 18 residues, 1–18 (MKLRLIAFVLILWTETLA), serve as a signal peptide directing secretion. The segment at 19–1426 (DQSPGPGPEY…ACCCTFCKCP (1408 aa)) is nonhelical region. VWFA domains follow at residues 30-209 (DVVF…IKDV), 268-445 (DLIF…LKKI), 474-644 (DIYF…KNEI), 660-829 (DIMF…ESKL), 846-1023 (DIVF…QETL), 1037-1214 (DVIF…VREI), and 1226-1413 (DVVV…LGNI). Residues N201, N292, and N614 are each glycosylated (N-linked (GlcNAc...) asparagine). 5 consecutive Collagen-like domains span residues 1426-1478 (PGIP…GCPG), 1474-1524 (VGCP…DPGN), 1557-1614 (GQKG…GPEG), 1632-1689 (GSQG…GIPG), and 1706-1762 (GDPG…AGQP). Residues 1427–1760 (GIPGPHGTRG…GRRGPKGTAG (334 aa)) are triple-helical region. The interval 1435–1761 (RGLQASKGSS…RRGPKGTAGQ (327 aa)) is disordered. Positions 1452–1464 (HRGEDGDPGRRGE) are enriched in basic and acidic residues. Over residues 1537 to 1567 (DGEKGFPGDPGDPGKDSNIKGQKGEKGERGR) the composition is skewed to basic and acidic residues. Polar residues predominate over residues 1597-1609 (PSGQAGNPGPQGT). The segment covering 1610–1622 (QGPEGLQGSQGSS) has biased composition (low complexity). Residues 1649-1651 (RGD) carry the Cell attachment site motif. A compositionally biased stretch (gly residues) spans 1718–1727 (GIPGGPGPKG). The span at 1740–1750 (RSGLQGSQGPP) shows a compositional bias: low complexity. The interval 1761-2640 (QPIYSPCELI…NSKQDGEDAR (880 aa)) is nonhelical region. 2 consecutive VWFA domains span residues 1790–1970 (ELVF…KLRR) and 1996–2186 (DVAF…VKFL). 2 consecutive short sequence motifs (cell attachment site) follow at residues 2216 to 2218 (RGD) and 2259 to 2261 (RGD). The 196-residue stretch at 2321–2516 (DVAFLIDASQ…PDLDYVIKFI (196 aa)) folds into the VWFA 10 domain. The N-linked (GlcNAc...) asparagine glycan is linked to N2541. The segment at 2617 to 2640 (DKEEPCSAETPAPVNSKQDGEDAR) is disordered.

Belongs to the type VI collagen family. Trimers composed of three different chains: alpha-1(VI), alpha-2(VI), and alpha-3(VI) or alpha-4(VI) or alpha-5(VI) or alpha-6(VI). Post-translationally, prolines at the third position of the tripeptide repeating unit (G-X-Y) are hydroxylated in some or all of the chains. In newborn, it is expressed in lung, heart, kidney, muscle, brain, intestine, skin, femur, sternum and calvaria. In adult, it is widely expressed and is detected in lung, heart, kidney, spleen, muscle, ovary, uterus, brain, skin, liver and sternum.

It localises to the secreted. Its subcellular location is the extracellular space. It is found in the extracellular matrix. Functionally, collagen VI acts as a cell-binding protein. The chain is Collagen alpha-5(VI) chain (Col6a5) from Mus musculus (Mouse).